We begin with the raw amino-acid sequence, 365 residues long: Ribosome biogenesis regulatory protein homolog (365 aa).

An N-acetylmethionine modification is found at methionine 1. The residue at position 5 (serine 5) is a Phosphoserine. Residues lysine 154 and lysine 226 each participate in a glycyl lysine isopeptide (Lys-Gly) (interchain with G-Cter in SUMO2) cross-link. The tract at residues glycine 233–lysine 253 is disordered. Residues phenylalanine 235–proline 245 are compositionally biased toward basic and acidic residues. Residue lysine 266 forms a Glycyl lysine isopeptide (Lys-Gly) (interchain with G-Cter in SUMO2) linkage. Arginine 273 bears the Citrulline mark. The segment at proline 280–lysine 365 is disordered. Residues lysine 302 to glycine 325 are compositionally biased toward basic residues. Residues glycine 337–glycine 350 are compositionally biased toward gly residues. Residues glycine 351–lysine 365 show a composition bias toward basic residues.

It belongs to the RRS1 family. As to quaternary structure, component of a hexameric 5S RNP precursor complex, composed of 5S RNA, RRS1, RPF2/BXDC1, RPL5, RPL11 and HEATR3; this complex acts as a precursor for ribosome assembly. Post-translationally, citrullinated by PADI4.

The protein localises to the nucleus. Its subcellular location is the nucleolus. Its function is as follows. Involved in ribosomal large subunit assembly. May regulate the localization of the 5S RNP/5S ribonucleoprotein particle to the nucleolus. The chain is Ribosome biogenesis regulatory protein homolog (RRS1) from Homo sapiens (Human).